The primary structure comprises 127 residues: Biogenesis of lysosome-related organelles complex 1 subunit BLS1 (127 aa).

The tract at residues 103–127 (KNSHNTNHGGCNKTKNSSKDKLLDK) is disordered. Residues 105 to 117 (SHNTNHGGCNKTK) are compositionally biased toward polar residues.

Belongs to the BLOC1S1 family. As to quaternary structure, component of the biogenesis of lysosome-related organelles complex-1 (BLOC-1).

It localises to the endosome. Functionally, component of the biogenesis of lysosome-related organelles complex-1 (BLOC-1), a complex involved in endosomal cargo sorting. This chain is Biogenesis of lysosome-related organelles complex 1 subunit BLS1 (BLS1), found in Vanderwaltozyma polyspora (strain ATCC 22028 / DSM 70294 / BCRC 21397 / CBS 2163 / NBRC 10782 / NRRL Y-8283 / UCD 57-17) (Kluyveromyces polysporus).